A 385-amino-acid chain; its full sequence is Digeranylgeranylglycerophospholipid reductase 2 (385 aa).

10 residues coordinate FAD: A13, E32, C43, A44, G46, R95, A119, D273, G285, and I286.

Belongs to the geranylgeranyl reductase family. DGGGPL reductase subfamily. FAD is required as a cofactor.

The catalysed reaction is a 2,3-bis-O-phytanyl-sn-glycerol 1-phospholipid + 8 A = a 2,3-bis-O-(geranylgeranyl)-sn-glycerol 1-phospholipid + 8 AH2. It carries out the reaction 2,3-bis-O-(phytanyl)-sn-glycerol 1-phosphate + 8 A = 2,3-bis-O-(geranylgeranyl)-sn-glycerol 1-phosphate + 8 AH2. It catalyses the reaction CDP-2,3-bis-O-(geranylgeranyl)-sn-glycerol + 8 AH2 = CDP-2,3-bis-O-(phytanyl)-sn-glycerol + 8 A. The enzyme catalyses archaetidylserine + 8 AH2 = 2,3-bis-O-phytanyl-sn-glycero-3-phospho-L-serine + 8 A. Its pathway is membrane lipid metabolism; glycerophospholipid metabolism. Its function is as follows. Is involved in the reduction of 2,3-digeranylgeranylglycerophospholipids (unsaturated archaeols) into 2,3-diphytanylglycerophospholipids (saturated archaeols) in the biosynthesis of archaeal membrane lipids. Catalyzes the formation of archaetidic acid (2,3-di-O-phytanyl-sn-glyceryl phosphate) from 2,3-di-O-geranylgeranylglyceryl phosphate (DGGGP) via the hydrogenation of each double bond of the isoprenoid chains. Is also probably able to reduce double bonds of geranyl groups in CDP-2,3-bis-O-(geranylgeranyl)-sn-glycerol and archaetidylserine, thus acting at various stages in the biosynthesis of archaeal membrane lipids. The sequence is that of Digeranylgeranylglycerophospholipid reductase 2 from Methanothermobacter thermautotrophicus (strain ATCC 29096 / DSM 1053 / JCM 10044 / NBRC 100330 / Delta H) (Methanobacterium thermoautotrophicum).